The following is a 359-amino-acid chain: Nicotinate N-methyltransferase 1 (359 aa).

Position 226 (D226) interacts with S-adenosyl-L-methionine.

This sequence belongs to the class I-like SAM-binding methyltransferase superfamily. Cation-independent O-methyltransferase family. In terms of tissue distribution, highly expressed in anthers, pistils, developing siliques, and developing seeds.

It is found in the cytoplasm. Its subcellular location is the cytosol. It catalyses the reaction nicotinate + S-adenosyl-L-methionine = N-methylnicotinate + S-adenosyl-L-homocysteine. Functionally, involved in nicotinate detoxification in planta. Catalyzes the conversion of nicotinate to N-methylnicotinate, which is a detoxified form of endogenous nicotinate in planta. This chain is Nicotinate N-methyltransferase 1, found in Arabidopsis thaliana (Mouse-ear cress).